Here is a 354-residue protein sequence, read N- to C-terminus: Probable alcohol acetyltransferase (354 aa).

Residues serine 124 and histidine 293 each act as charge relay system in the active site.

This sequence belongs to the AB hydrolase superfamily.

Functionally, probable alcohol acetyltransferase that uses acetyl-CoA to synthesize acetate esters from various alcohols. Not involved in the synthesis of ethyl acetate. This is Probable alcohol acetyltransferase (EAT2) from Cyberlindnera jadinii (strain ATCC 18201 / CBS 1600 / BCRC 20928 / JCM 3617 / NBRC 0987 / NRRL Y-1542) (Torula yeast).